The chain runs to 199 residues: Protein-methionine-sulfoxide reductase heme-binding subunit MsrQ (199 aa).

4 consecutive transmembrane segments (helical) span residues 8–28, 82–102, 116–136, and 153–173; these read IIWLKVCLHLVGFLPLLWLFW, LWCFVWATLHLTSYALLELGI, PYLTLGIISWLALLALTLTST, and VVYLVAILAPVHYLWSVKVLS.

Belongs to the MsrQ family. In terms of assembly, heterodimer of a catalytic subunit (MsrP) and a heme-binding subunit (MsrQ). Requires FMN as cofactor. The cofactor is heme b.

It localises to the cell inner membrane. Part of the MsrPQ system that repairs oxidized periplasmic proteins containing methionine sulfoxide residues (Met-O), using respiratory chain electrons. Thus protects these proteins from oxidative-stress damage caused by reactive species of oxygen and chlorine generated by the host defense mechanisms. MsrPQ is essential for the maintenance of envelope integrity under bleach stress, rescuing a wide series of structurally unrelated periplasmic proteins from methionine oxidation, including the primary periplasmic chaperone SurA and the lipoprotein Pal. MsrQ provides electrons for reduction to the reductase catalytic subunit MsrP, using the quinone pool of the respiratory chain. This chain is Protein-methionine-sulfoxide reductase heme-binding subunit MsrQ, found in Salmonella arizonae (strain ATCC BAA-731 / CDC346-86 / RSK2980).